Reading from the N-terminus, the 254-residue chain is uncharacterized protein (254 aa).

Belongs to the MtxX family.

This is an uncharacterized protein from Methanopyrus kandleri (strain AV19 / DSM 6324 / JCM 9639 / NBRC 100938).